The primary structure comprises 423 residues: MAAWGCVAALGAARGLCWRAARAAAGLQGRPARRCYAVGPAQSPPTFGFLLDIDGVLVRGHRVIPAALKAFRRLVNSQGQLRVPVVFVTNAGNILQHSKAQELSALLGCEVDADQVILSHSPMKLFSEYHEKRMLVSGQGPVMENAQGLGFRNVVTVDELRMAFPLLDMVDLERRLKTTPLPRNDFPRIEGVLLLGEPVRWETSLQLIMDVLLSNGSPGAGLATPPYPHLPVLASNMDLLWMAEAKMPRFGHGTFLLCLETIYQKVTGKELRYEGLMGKPSILTYQYAEDLIRRQAERRGWAAPIRKLYAVGDNPMSDVYGANLFHQYLQKATHDGAPELGAGGTRQQQPSASQSCISILVCTGVYNPRNPQSTEPVLGGGEPPFHGHRDLCFSPGLMEASHVVNDVNEAVQLVFRKEGWALE.

Positions 1 to 23 (MAAWGCVAALGAARGLCWRAARA) are cleaved as a signal peptide.

It belongs to the HAD-like hydrolase superfamily. In terms of tissue distribution, widely expressed.

The polypeptide is Haloacid dehalogenase-like hydrolase domain-containing 5 (Homo sapiens (Human)).